The following is a 278-amino-acid chain: Cation-dependent mannose-6-phosphate receptor (278 aa).

A signal peptide spans Met1–Ala21. At Val22–Ser188 the chain is on the lumenal side. The region spanning Lys31–Pro182 is the MRH domain. Cys33 and Cys79 form a disulfide bridge. Residues Asn58, Asn84, Asn95, Asn108, and Asn114 are each glycosylated (N-linked (GlcNAc...) asparagine). Intrachain disulfides connect Cys133–Cys168 and Cys146–Cys180. The chain crosses the membrane as a helical span at residues Val189 to Phe209. At Leu210–Met278 the chain is on the cytoplasmic side. A disordered region spans residues Tyr256–Met278. Residue Ser268 is modified to Phosphoserine.

As to quaternary structure, homodimer. Binds GGA1, GGA2 and GGA3.

It is found in the lysosome membrane. Functionally, transport of phosphorylated lysosomal enzymes from the Golgi complex and the cell surface to lysosomes. Lysosomal enzymes bearing phosphomannosyl residues bind specifically to mannose-6-phosphate receptors in the Golgi apparatus and the resulting receptor-ligand complex is transported to an acidic prelyosomal compartment where the low pH mediates the dissociation of the complex. The protein is Cation-dependent mannose-6-phosphate receptor (M6pr) of Rattus norvegicus (Rat).